The sequence spans 570 residues: Probable metalloreductase AIM14 (570 aa).

A run of 7 helical transmembrane segments spans residues 21-41 (IKYG…LALL), 70-90 (AIHL…HYSL), 101-118 (LGRL…LTLR), 142-162 (IITV…AIDD), 177-197 (FVGF…IGPM), 204-224 (LFYI…PIHS), and 230-250 (FPFL…RIVF). Residues 101–219 (LGRLSYALIP…NLVNVAFILL (119 aa)) form the Ferric oxidoreductase domain. The region spanning 250 to 388 (FAKSLMILNK…GGSGISFALP (139 aa)) is the FAD-binding FR-type domain. Polar residues predominate over residues 481–505 (SNFNSENADSNDNTPETSHSPTKEN). Residues 481 to 507 (SNFNSENADSNDNTPETSHSPTKENGS) are disordered.

The protein belongs to the ferric reductase (FRE) family. AIM14 subfamily. In terms of assembly, interacts with ribosomes.

The protein localises to the membrane. Probable cell surface metalloreductase. May be involved in iron or copper homeostasis. This chain is Probable metalloreductase AIM14 (AIM14), found in Saccharomyces cerevisiae (strain RM11-1a) (Baker's yeast).